A 28-amino-acid polypeptide reads, in one-letter code: Dermaseptin-DI2 (28 aa).

In terms of tissue distribution, expressed by the skin glands.

It is found in the secreted. Its function is as follows. Has antibacterial activity against the Gram-positive bacteria S.aureus and E.faecalis, and the Gram-negative bacteria P.aeruginosa and E.coli. Has antiprotozoal activity against T.cruzi. Has antifungal activity against the yeasts C.tropicalis (MIC=10.9 uM), C.guilliermondii (MIC=21.8 uM), C.albicans (MIC=21.8 uM) and C.albicans ATCC 1023 (MIC=10.9 uM). Decreases viability of murine peritoneal cells. Fuses to, and disrupts liposomes. The sequence is that of Dermaseptin-DI2 from Phyllomedusa distincta (Monkey frog).